A 786-amino-acid polypeptide reads, in one-letter code: LPS-assembly protein LptD (786 aa).

Residues 1–24 (MKKRIPTLLATMIASALYSHQGLA) form the signal peptide. Cystine bridges form between C31-C726 and C173-C727.

Belongs to the LptD family. Component of the lipopolysaccharide transport and assembly complex. Interacts with LptE and LptA. In terms of processing, contains two intramolecular disulfide bonds.

The protein localises to the cell outer membrane. Its function is as follows. Together with LptE, is involved in the assembly of lipopolysaccharide (LPS) at the surface of the outer membrane. The chain is LPS-assembly protein LptD from Salmonella choleraesuis (strain SC-B67).